The chain runs to 253 residues: Small ribosomal subunit protein uS2 (253 aa).

The protein belongs to the universal ribosomal protein uS2 family.

The sequence is that of Small ribosomal subunit protein uS2 from Hahella chejuensis (strain KCTC 2396).